A 97-amino-acid chain; its full sequence is MVQKPHSFRRKTRKKLRKHPRRRGLPPLTRFLQEFEVGQKVHIVIEPSYHKGMPDPRFHGRTGTVVGKRGDAYIVEVPDGNKVKTLFIHPVHLRPQK.

Over residues 1–24 (MVQKPHSFRRKTRKKLRKHPRRRG) the composition is skewed to basic residues. The interval 1 to 25 (MVQKPHSFRRKTRKKLRKHPRRRGL) is disordered.

The protein belongs to the eukaryotic ribosomal protein eL21 family.

This chain is Large ribosomal subunit protein eL21 (rpl21e), found in Pyrococcus horikoshii (strain ATCC 700860 / DSM 12428 / JCM 9974 / NBRC 100139 / OT-3).